We begin with the raw amino-acid sequence, 363 residues long: D-xylulose reductase (363 aa).

Residues Cys-41, His-66, and Glu-159 each coordinate Zn(2+). Residue 183–188 (GAGPVG) participates in NAD(+) binding.

This sequence belongs to the zinc-containing alcohol dehydrogenase family. Zn(2+) is required as a cofactor.

It catalyses the reaction xylitol + NAD(+) = D-xylulose + NADH + H(+). Its pathway is carbohydrate degradation; L-arabinose degradation via L-arabinitol; D-xylulose 5-phosphate from L-arabinose (fungal route): step 4/5. This Scheffersomyces stipitis (strain ATCC 58785 / CBS 6054 / NBRC 10063 / NRRL Y-11545) (Yeast) protein is D-xylulose reductase (XYL2).